The following is a 282-amino-acid chain: Bis(5'-nucleosyl)-tetraphosphatase, symmetrical (282 aa).

Belongs to the Ap4A hydrolase family.

The catalysed reaction is P(1),P(4)-bis(5'-adenosyl) tetraphosphate + H2O = 2 ADP + 2 H(+). Functionally, hydrolyzes diadenosine 5',5'''-P1,P4-tetraphosphate to yield ADP. The protein is Bis(5'-nucleosyl)-tetraphosphatase, symmetrical of Citrobacter koseri (strain ATCC BAA-895 / CDC 4225-83 / SGSC4696).